The sequence spans 204 residues: Large ribosomal subunit protein bL25 (204 aa).

The protein belongs to the bacterial ribosomal protein bL25 family. CTC subfamily. As to quaternary structure, part of the 50S ribosomal subunit; part of the 5S rRNA/L5/L18/L25 subcomplex. Contacts the 5S rRNA. Binds to the 5S rRNA independently of L5 and L18.

Its function is as follows. This is one of the proteins that binds to the 5S RNA in the ribosome where it forms part of the central protuberance. This chain is Large ribosomal subunit protein bL25, found in Burkholderia mallei (strain NCTC 10247).